Reading from the N-terminus, the 234-residue chain is 2,3-bisphosphoglycerate-dependent phosphoglycerate mutase (234 aa).

Residues 8 to 15 (RHGESVWN), 21 to 22 (TG), arginine 60, 87 to 90 (ERHY), lysine 98, 114 to 115 (RR), and 183 to 184 (GN) contribute to the substrate site. Histidine 9 serves as the catalytic Tele-phosphohistidine intermediate. Glutamate 87 serves as the catalytic Proton donor/acceptor.

Belongs to the phosphoglycerate mutase family. BPG-dependent PGAM subfamily. In terms of assembly, homodimer.

It catalyses the reaction (2R)-2-phosphoglycerate = (2R)-3-phosphoglycerate. It participates in carbohydrate degradation; glycolysis; pyruvate from D-glyceraldehyde 3-phosphate: step 3/5. In terms of biological role, catalyzes the interconversion of 2-phosphoglycerate and 3-phosphoglycerate. This chain is 2,3-bisphosphoglycerate-dependent phosphoglycerate mutase, found in Citrifermentans bemidjiense (strain ATCC BAA-1014 / DSM 16622 / JCM 12645 / Bem) (Geobacter bemidjiensis).